We begin with the raw amino-acid sequence, 491 residues long: Ketol-acid reductoisomerase (NADP(+)) (491 aa).

A KARI N-terminal Rossmann domain is found at 14–208 (LDQLGRCRFM…GGHRAGVLES (195 aa)). NADP(+) is bound by residues 45–48 (CGAQ), R68, R76, S78, and 108–110 (DKQ). H132 is an active-site residue. G158 serves as a coordination point for NADP(+). KARI C-terminal knotted domains follow at residues 209 to 344 (SFVA…NAPK) and 345 to 485 (YEGK…MTDM). Mg(2+) is bound by residues D217, E221, E389, and E393. A substrate-binding site is contributed by S414.

Belongs to the ketol-acid reductoisomerase family. It depends on Mg(2+) as a cofactor.

The catalysed reaction is (2R)-2,3-dihydroxy-3-methylbutanoate + NADP(+) = (2S)-2-acetolactate + NADPH + H(+). It catalyses the reaction (2R,3R)-2,3-dihydroxy-3-methylpentanoate + NADP(+) = (S)-2-ethyl-2-hydroxy-3-oxobutanoate + NADPH + H(+). The protein operates within amino-acid biosynthesis; L-isoleucine biosynthesis; L-isoleucine from 2-oxobutanoate: step 2/4. It functions in the pathway amino-acid biosynthesis; L-valine biosynthesis; L-valine from pyruvate: step 2/4. In terms of biological role, involved in the biosynthesis of branched-chain amino acids (BCAA). Catalyzes an alkyl-migration followed by a ketol-acid reduction of (S)-2-acetolactate (S2AL) to yield (R)-2,3-dihydroxy-isovalerate. In the isomerase reaction, S2AL is rearranged via a Mg-dependent methyl migration to produce 3-hydroxy-3-methyl-2-ketobutyrate (HMKB). In the reductase reaction, this 2-ketoacid undergoes a metal-dependent reduction by NADPH to yield (R)-2,3-dihydroxy-isovalerate. In Pasteurella multocida (strain Pm70), this protein is Ketol-acid reductoisomerase (NADP(+)).